Reading from the N-terminus, the 185-residue chain is Pyruvate/ketoisovalerate oxidoreductases common subunit gamma (185 aa).

In terms of assembly, heterotetramer of one alpha, one beta, one delta and one gamma chain.

The enzyme catalyses 2 oxidized [2Fe-2S]-[ferredoxin] + pyruvate + CoA = 2 reduced [2Fe-2S]-[ferredoxin] + acetyl-CoA + CO2 + H(+). It catalyses the reaction 3-methyl-2-oxobutanoate + 2 oxidized [2Fe-2S]-[ferredoxin] + CoA = 2-methylpropanoyl-CoA + 2 reduced [2Fe-2S]-[ferredoxin] + CO2 + H(+). The sequence is that of Pyruvate/ketoisovalerate oxidoreductases common subunit gamma (porG) from Pyrococcus abyssi (strain GE5 / Orsay).